Reading from the N-terminus, the 483-residue chain is Rhamnulokinase (483 aa).

11-15 lines the ATP pocket; sequence ASSGR. Substrate-binding positions include glycine 79 and 234–236; that span reads HDT. Catalysis depends on aspartate 235, which acts as the Proton acceptor. Threonine 257 is a binding site for ATP. Asparagine 294 contacts substrate. Glutamine 302 is a binding site for ATP. Cysteine 352 and cysteine 369 are joined by a disulfide. Glycine 401 contacts ATP.

The protein belongs to the rhamnulokinase family. It depends on Mg(2+) as a cofactor.

The catalysed reaction is L-rhamnulose + ATP = L-rhamnulose 1-phosphate + ADP + H(+). The protein operates within carbohydrate degradation; L-rhamnose degradation; glycerone phosphate from L-rhamnose: step 2/3. Involved in the catabolism of L-rhamnose (6-deoxy-L-mannose). Catalyzes the transfer of the gamma-phosphate group from ATP to the 1-hydroxyl group of L-rhamnulose to yield L-rhamnulose 1-phosphate. In Listeria monocytogenes serovar 1/2a (strain ATCC BAA-679 / EGD-e), this protein is Rhamnulokinase.